Consider the following 284-residue polypeptide: 2,3,4,5-tetrahydropyridine-2,6-dicarboxylate N-succinyltransferase (284 aa).

Residues R111 and D148 each coordinate substrate.

It belongs to the transferase hexapeptide repeat family. As to quaternary structure, homotrimer.

Its subcellular location is the cytoplasm. It carries out the reaction (S)-2,3,4,5-tetrahydrodipicolinate + succinyl-CoA + H2O = (S)-2-succinylamino-6-oxoheptanedioate + CoA. It functions in the pathway amino-acid biosynthesis; L-lysine biosynthesis via DAP pathway; LL-2,6-diaminopimelate from (S)-tetrahydrodipicolinate (succinylase route): step 1/3. The chain is 2,3,4,5-tetrahydropyridine-2,6-dicarboxylate N-succinyltransferase from Brucella suis (strain ATCC 23445 / NCTC 10510).